Here is a 540-residue protein sequence, read N- to C-terminus: Light-independent protochlorophyllide reductase subunit B (540 aa).

Asp-36 contacts [4Fe-4S] cluster. Catalysis depends on Asp-287, which acts as the Proton donor. A substrate-binding site is contributed by 422–423 (GL).

Belongs to the ChlB/BchB/BchZ family. Protochlorophyllide reductase is composed of three subunits; BchL, BchN and BchB. Forms a heterotetramer of two BchB and two BchN subunits. Requires [4Fe-4S] cluster as cofactor.

The enzyme catalyses chlorophyllide a + oxidized 2[4Fe-4S]-[ferredoxin] + 2 ADP + 2 phosphate = protochlorophyllide a + reduced 2[4Fe-4S]-[ferredoxin] + 2 ATP + 2 H2O. It functions in the pathway porphyrin-containing compound metabolism; bacteriochlorophyll biosynthesis (light-independent). Its function is as follows. Component of the dark-operative protochlorophyllide reductase (DPOR) that uses Mg-ATP and reduced ferredoxin to reduce ring D of protochlorophyllide (Pchlide) to form chlorophyllide a (Chlide). This reaction is light-independent. The NB-protein (BchN-BchB) is the catalytic component of the complex. The polypeptide is Light-independent protochlorophyllide reductase subunit B (Rhodopseudomonas palustris (strain TIE-1)).